We begin with the raw amino-acid sequence, 118 residues long: Large ribosomal subunit protein bL17 (118 aa).

The protein belongs to the bacterial ribosomal protein bL17 family. As to quaternary structure, part of the 50S ribosomal subunit. Contacts protein L32.

The polypeptide is Large ribosomal subunit protein bL17 (Onion yellows phytoplasma (strain OY-M)).